The chain runs to 561 residues: Carboxylesterase 1F (561 aa).

The signal sequence occupies residues 1-17 (MFLSTLFLVSLATCVIC). A disulfide bond links Cys87 and Cys116. Residue Ser221 is the Acyl-ester intermediate of the active site. Cys273 and Cys284 are oxidised to a cystine. Catalysis depends on charge relay system residues Glu353 and His466. The Prevents secretion from ER signature appears at 558–561 (HNEL).

The protein belongs to the type-B carboxylesterase/lipase family. As to expression, expressed in liver, white and brown adipose tissue, kidney, intestine, adrenal, heart and ovary. Not detected in muscle, lung, testis, brain and spleen.

Its subcellular location is the lipid droplet. The protein resides in the cytoplasm. It is found in the cytosol. It localises to the endoplasmic reticulum. The protein localises to the microsome. It carries out the reaction a carboxylic ester + H2O = an alcohol + a carboxylate + H(+). The enzyme catalyses all-trans-retinyl hexadecanoate + H2O = all-trans-retinol + hexadecanoate + H(+). Its function is as follows. Involved in the detoxification of xenobiotics and in the activation of ester and amide prodrugs. Hydrolyzes retinyl esters. Hydrolyzes p-nitrophenyl butyrate (PNPB), triacylglycerol and monoacylglycerol. Shows higher activity against PNPB, a short-chain fatty acid ester, than against triolein, a long-chain fatty acid ester. Shows no detectable activity against diacylglycerol, cholesterol ester or phospholipids. May play a role in adipocyte lipolysis. The protein is Carboxylesterase 1F of Mus musculus (Mouse).